Reading from the N-terminus, the 278-residue chain is Msm operon regulatory protein (278 aa).

The HTH araC/xylS-type domain maps to 176 to 274 (NQVKKIIHSQ…GKSPSKFRKE (99 aa)). 2 consecutive DNA-binding regions (H-T-H motif) follow at residues 193–214 (NDIA…RKST) and 241–264 (IAEI…KNYF).

In terms of biological role, regulatory protein for the msm operon for multiple sugar metabolism. Activates the transcription of the msmEFGK, aga, dexB and gftA genes. The chain is Msm operon regulatory protein (msmR) from Streptococcus mutans serotype c (strain ATCC 700610 / UA159).